A 402-amino-acid polypeptide reads, in one-letter code: Flavohemoprotein (402 aa).

Residues 1–136 enclose the Globin domain; sequence MLSEKTIEIV…IADAFISIEA (136 aa). Histidine 85 is a binding site for heme b. Active-site charge relay system residues include tyrosine 95 and glutamate 135. A reductase region spans residues 147–402; the sequence is GGWKDFRNFV…EFFGPAASLQ (256 aa). The region spanning 150 to 260 is the FAD-binding FR-type domain; it reads KDFRNFVVVK…SAPAGDFVLN (111 aa). FAD contacts are provided by residues tyrosine 188 and 204-207; that span reads RQYS. 273 to 278 provides a ligand contact to NADP(+); sequence GVGITP. 394–397 is an FAD binding site; the sequence is FFGP.

This sequence belongs to the globin family. Two-domain flavohemoproteins subfamily. In the C-terminal section; belongs to the flavoprotein pyridine nucleotide cytochrome reductase family. Heme b is required as a cofactor. It depends on FAD as a cofactor.

It catalyses the reaction 2 nitric oxide + NADPH + 2 O2 = 2 nitrate + NADP(+) + H(+). The enzyme catalyses 2 nitric oxide + NADH + 2 O2 = 2 nitrate + NAD(+) + H(+). Its function is as follows. Is involved in NO detoxification in an aerobic process, termed nitric oxide dioxygenase (NOD) reaction that utilizes O(2) and NAD(P)H to convert NO to nitrate, which protects the bacterium from various noxious nitrogen compounds. Therefore, plays a central role in the inducible response to nitrosative stress. The polypeptide is Flavohemoprotein (Bacillus anthracis).